Consider the following 91-residue polypeptide: Alpha-defensin-related sequence 2 (91 aa).

Residues 1 to 19 (MKKLVLLFALVLLAFQVQA) form the signal peptide. Positions 20–58 (DSIQNTDEETKTEEQPGEKDQAVSVSFGDPQGSALQDAA) are excised as a propeptide. Residues 22-48 (IQNTDEETKTEEQPGEKDQAVSVSFGD) form a disordered region. A compositionally biased stretch (basic and acidic residues) spans 27–40 (EETKTEEQPGEKDQ). 7 tandem repeats follow at residues 65–67 (CPQ), 68–70 (CPR), 71–73 (CPS), 74–76 (CPS), 77–79 (CPR), 80–82 (CPR), and 83–85 (CPR). The tract at residues 65–85 (CPQCPRCPSCPSCPRCPRCPR) is 7 X 3 AA tandem repeats of C-P-X.

It belongs to the alpha-defensin family. In terms of tissue distribution, small bowel, spleen, colon, kidney, liver, stomach and femur marrow.

Its subcellular location is the secreted. Its function is as follows. Apparent precursor of a secreted, cationic, proline- and cysteine-rich peptide that contains Cys-Pro-Xaa repeats. Unlike cryptdin, the proposed mature peptide region lacks the structural motif characteristic of defensins. It may have microbicidal activities. This Mus musculus (Mouse) protein is Alpha-defensin-related sequence 2 (Defa-rs2).